Consider the following 251-residue polypeptide: Prothoracicostatic peptides (251 aa).

The disordered stretch occupies residues 1-22; that stretch reads MRKSARGQVCTEAGAGASGDWQ. Residues 1 to 77 constitute a propeptide that is removed on maturation; the sequence is MRKSARGQVC…GWQDLNSAWG (77 aa). Tryptophan amide is present on W89. Residues 93–138 constitute a propeptide that is removed on maturation; it reads GWNDMSSAWGKRGWNDMSSAWGKRGWNDMSSAWGKRGWNDMSSAWG. W152 carries the tryptophan amide modification. Residues 156–187 constitute a propeptide that is removed on maturation; the sequence is AAEPDYEEIDAAIEQLIPIQQLSDNERMEVPE. Tryptophan amide is present on residues W198 and W228. The segment at 227–251 is disordered; that stretch reads MWGKRSAPDADAVDDDHESSARDEA.

In terms of tissue distribution, prothoracicostatic peptide 5: Expressed in antennal lobe (AL), corpora cardiaca (CC), corpora allata (CA) and gnathal ganglion (GNG) (at protein level). Expression in AL detected in all animals, in CC, CA and GNG in most (at protein level). Prothoracicostatic peptide 6: Expressed in antennal lobe (AL), corpora cardiaca (CC), corpora allata (CA) and gnathal ganglion (GNG) (at protein level). Expression in AL detected in all animals, expression in GNG in most animals, in CA and CC detected in some animals (at protein level). Prothoracicostatic peptide 7: Expressed in antennal lobe (AL), corpora cardiaca (CC), corpora allata (CA) and gnathal ganglion (GNG) (at protein level). Expression in AL, CA and CC detected in most animals, expression in GNG in some animals (at protein level). Prothoracicostatic peptide precursor-related peptide 2: Expressed in antennal lobe (AL), corpora cardiaca (CC) and corpora allata (CA) with expression detected in few animals (at protein level). Not expressed in gnathal ganglion (GNG) (at protein level). Prothoracicostatic peptide 8: Expressed in antennal lobe (AL), corpora cardiaca (CC), corpora allata (CA) and gnathal ganglion (GNG) (at protein level). Expression in AL detected in all animals, expression in GNG in most animals, in CA and CC detected in some animals (at protein level). Prothoracicostatic peptide precursor-related peptide 3: Expressed in antennal lobe (AL) in few animals (at protein level). Not expressed in corpora cardiaca (CC), corpora allata (CA) and gnathal ganglion (GNG) (at protein level).

The protein localises to the secreted. This Agrotis ipsilon (Black cutworm moth) protein is Prothoracicostatic peptides.